The sequence spans 293 residues: 3-hydroxybutyryl-CoA dehydrogenase (293 aa).

The protein belongs to the 3-hydroxyacyl-CoA dehydrogenase family.

It catalyses the reaction (3S)-3-hydroxybutanoyl-CoA + NADP(+) = acetoacetyl-CoA + NADPH + H(+). Its pathway is lipid metabolism; butanoate metabolism. The protein is 3-hydroxybutyryl-CoA dehydrogenase (hbdA) of Bradyrhizobium diazoefficiens (strain JCM 10833 / BCRC 13528 / IAM 13628 / NBRC 14792 / USDA 110).